The sequence spans 324 residues: Phospho-N-acetylmuramoyl-pentapeptide-transferase (324 aa).

10 helical membrane-spanning segments follow: residues 5 to 25, 57 to 77, 81 to 101, 117 to 137, 147 to 167, 176 to 196, 203 to 223, 227 to 247, 250 to 270, and 302 to 322; these read AIVIAMAVSFLITVVLSPLFI, IMILLAIVATTLWITPKIAGL, TYLLLLVTVGYGVLGFLDDMI, FIGQLLIAAIFFAVYRQSGFS, WSVDLGWAYGVLLLFMLVGGS, LDGLLAGTAAIAFGAYAVLAW, VAVFCVAVVGAVLGFLVFNAH, VFMGDTGSLALGGAIAAVAVL, LELLLVIIGGVFVIETLSVII, and IVVTFWAVGLLFAMLGIYIEV.

It belongs to the glycosyltransferase 4 family. MraY subfamily. Mg(2+) is required as a cofactor.

The protein localises to the cell membrane. It catalyses the reaction UDP-N-acetyl-alpha-D-muramoyl-L-alanyl-gamma-D-glutamyl-meso-2,6-diaminopimeloyl-D-alanyl-D-alanine + di-trans,octa-cis-undecaprenyl phosphate = di-trans,octa-cis-undecaprenyl diphospho-N-acetyl-alpha-D-muramoyl-L-alanyl-D-glutamyl-meso-2,6-diaminopimeloyl-D-alanyl-D-alanine + UMP. It participates in cell wall biogenesis; peptidoglycan biosynthesis. In terms of biological role, catalyzes the initial step of the lipid cycle reactions in the biosynthesis of the cell wall peptidoglycan: transfers peptidoglycan precursor phospho-MurNAc-pentapeptide from UDP-MurNAc-pentapeptide onto the lipid carrier undecaprenyl phosphate, yielding undecaprenyl-pyrophosphoryl-MurNAc-pentapeptide, known as lipid I. The sequence is that of Phospho-N-acetylmuramoyl-pentapeptide-transferase from Geobacillus kaustophilus (strain HTA426).